The primary structure comprises 1396 residues: ATP-dependent helicase/nuclease subunit A (1396 aa).

The tract at residues M1 to D25 is disordered. Residues P26–R532 form the UvrD-like helicase ATP-binding domain. A47 to T54 contacts ATP. Disordered stretches follow at residues D590–T649 and H1171–D1205. In terms of domain architecture, UvrD-like helicase C-terminal spans H615 to G920. Residues T1181 to T1199 are compositionally biased toward low complexity.

Belongs to the helicase family. AddA subfamily. As to quaternary structure, heterodimer of AddA and AddB/RexB. The cofactor is Mg(2+).

It catalyses the reaction Couples ATP hydrolysis with the unwinding of duplex DNA by translocating in the 3'-5' direction.. It carries out the reaction ATP + H2O = ADP + phosphate + H(+). Its function is as follows. The heterodimer acts as both an ATP-dependent DNA helicase and an ATP-dependent, dual-direction single-stranded exonuclease. Recognizes the chi site generating a DNA molecule suitable for the initiation of homologous recombination. The AddA nuclease domain is required for chi fragment generation; this subunit has the helicase and 3' -&gt; 5' nuclease activities. The chain is ATP-dependent helicase/nuclease subunit A from Heliobacterium modesticaldum (strain ATCC 51547 / Ice1).